Here is a 316-residue protein sequence, read N- to C-terminus: Retinol dehydrogenase 11 (316 aa).

A helical; Signal-anchor for type II membrane protein transmembrane segment spans residues Met1–Ile21. Residues Arg22–Trp316 are Cytoplasmic-facing. Gly45–Gly51 provides a ligand contact to NADP(+). N6-acetyllysine is present on Lys109. Ser174 contacts substrate. Catalysis depends on Tyr199, which acts as the Proton acceptor.

Belongs to the short-chain dehydrogenases/reductases (SDR) family. Post-translationally, not glycosylated. As to expression, expressed at high level in liver and testis. Expressed at lower levels in smooth muscle, thymus, submaxillary gland and epididymis. In testis, expression is restricted to pachytene spermatocytes. Also expressed in four layers of the retina, including the outer segment of rods and cones.

It is found in the endoplasmic reticulum membrane. The catalysed reaction is all-trans-retinol + NADP(+) = all-trans-retinal + NADPH + H(+). It catalyses the reaction 11-cis-retinol + NADP(+) = 11-cis-retinal + NADPH + H(+). It carries out the reaction 9-cis-retinol + NADP(+) = 9-cis-retinal + NADPH + H(+). The enzyme catalyses 13-cis-retinol + NADP(+) = 13-cis-retinal + NADPH + H(+). The catalysed reaction is a medium-chain primary fatty alcohol + NADP(+) = a medium-chain fatty aldehyde + NADPH + H(+). It catalyses the reaction (2E,6Z)-nona-2,6-dien-1-ol + NADP(+) = (2E,6Z)-nona-2,6-dienal + NADPH + H(+). It carries out the reaction (E)-oct-2-en-1-ol + NADP(+) = (2E)-octenal + NADPH + H(+). The enzyme catalyses (E)-non-2-en-1-ol + NADP(+) = (E)-non-2-enal + NADPH + H(+). The catalysed reaction is heptan-1-ol + NADP(+) = heptanal + NADPH + H(+). It catalyses the reaction hexan-1-ol + NADP(+) = hexanal + NADPH + H(+). It carries out the reaction decan-1-ol + NADP(+) = decanal + NADPH + H(+). The enzyme catalyses nonan-1-ol + NADP(+) = nonanal + NADPH + H(+). The catalysed reaction is octan-1-ol + NADP(+) = octanal + NADPH + H(+). It catalyses the reaction (Z)-non-6-en-1-ol + NADP(+) = (Z)-non-6-enal + NADPH + H(+). Its pathway is cofactor metabolism; retinol metabolism. Retinol dehydrogenase with a clear preference for NADP. Displays high activity towards 9-cis, 11-cis and all-trans-retinol, and to a lesser extent on 13-cis-retinol. Also exhibits reductive activity towards toxic lipid peroxidation products such as medium-chain aldehydes trans-2-nonenal, nonanal, and cis-6-nonenal. Has no dehydrogenase activity towards steroid. Seems to be required for homeostasis of retinol in liver and testis. The polypeptide is Retinol dehydrogenase 11 (Rdh11) (Mus musculus (Mouse)).